A 100-amino-acid chain; its full sequence is UPF0213 protein YhbQ (100 aa).

The GIY-YIG domain maps to 2-77 (TPWFLYLIRT…KQLTKRQKER (76 aa)).

The protein belongs to the UPF0213 family.

The chain is UPF0213 protein YhbQ from Escherichia coli O1:K1 / APEC.